Consider the following 463-residue polypeptide: Metacaspase-1 (463 aa).

Residues 1 to 149 are disordered; sequence MSWNQYPGGG…PQLQGQGGQS (149 aa). A compositionally biased stretch (gly residues) spans 7 to 18; the sequence is PGGGHHQQGGYG. Positions 20–56 are enriched in pro residues; that stretch reads RPPPPQWAQQGPPPPPNMGYRPPPPPQAYYNNPPPPQ. A compositionally biased stretch (low complexity) spans 57-83; the sequence is QYQRPAPQQNGYQQGGYQQQQQSQGNY. Active-site residues include His-247 and Cys-309.

This sequence belongs to the peptidase C14B family.

In terms of biological role, involved in cell death (apoptosis). This Cryptococcus neoformans var. neoformans serotype D (strain B-3501A) (Filobasidiella neoformans) protein is Metacaspase-1 (MCA1).